The following is an 896-amino-acid chain: Alanine--tRNA ligase (896 aa).

His580, His584, Cys683, and His687 together coordinate Zn(2+).

It belongs to the class-II aminoacyl-tRNA synthetase family. Requires Zn(2+) as cofactor.

The protein resides in the cytoplasm. It catalyses the reaction tRNA(Ala) + L-alanine + ATP = L-alanyl-tRNA(Ala) + AMP + diphosphate. Its function is as follows. Catalyzes the attachment of alanine to tRNA(Ala) in a two-step reaction: alanine is first activated by ATP to form Ala-AMP and then transferred to the acceptor end of tRNA(Ala). Also edits incorrectly charged Ser-tRNA(Ala) and Gly-tRNA(Ala) via its editing domain. The sequence is that of Alanine--tRNA ligase from Mycolicibacterium smegmatis (strain ATCC 700084 / mc(2)155) (Mycobacterium smegmatis).